The following is an 88-amino-acid chain: Protein transport protein Sec61 subunit beta (88 aa).

The interval Met-1–Ser-41 is disordered. At Met-1–Pro-60 the chain is on the cytoplasmic side. The helical transmembrane segment at Leu-61–Ala-81 threads the bilayer.

This sequence belongs to the SEC61-beta family. As to quaternary structure, heterotrimeric complex composed of SEC61, SEB1 and SSS1.

The protein localises to the endoplasmic reticulum membrane. Necessary for protein translocation in the endoplasmic reticulum. The polypeptide is Protein transport protein Sec61 subunit beta (SBH1) (Kluyveromyces lactis (strain ATCC 8585 / CBS 2359 / DSM 70799 / NBRC 1267 / NRRL Y-1140 / WM37) (Yeast)).